The sequence spans 394 residues: Serine palmitoyltransferase (394 aa).

Pyridoxal 5'-phosphate is bound by residues 111–112 (GF), Ser-183, His-211, and Thr-239. The residue at position 242 (Lys-242) is an N6-(pyridoxal phosphate)lysine.

This sequence belongs to the class-II pyridoxal-phosphate-dependent aminotransferase family. Pyridoxal 5'-phosphate serves as cofactor.

It catalyses the reaction L-serine + hexadecanoyl-CoA + H(+) = 3-oxosphinganine + CO2 + CoA. It participates in lipid metabolism; sphingolipid metabolism. In terms of biological role, involved in de novo bacterial ceramide synthesis. Catalyzes the condensation of L-serine with palmitoyl-CoA (hexadecanoyl-CoA) to produce 3-oxosphinganine. Also capable of using alanine as substrate leading to the formation of 1-deoxysphinganine (1-deoxySa). Contributes to the levels of endogenous sphingolipids in its host. The protein is Serine palmitoyltransferase of Bacteroides thetaiotaomicron (strain ATCC 29148 / DSM 2079 / JCM 5827 / CCUG 10774 / NCTC 10582 / VPI-5482 / E50).